Reading from the N-terminus, the 534-residue chain is MSEVSNEAARRRTFAIISHPDAGKTTLTEKLLLFGGAIQMAGSVKGRKAARHATSDWMALEKERGISVTSSVMQFPYEGKIVNLLDTPGHADFGEDTYRVLTAVDSALMVIDVAKGVEERTIKLMEVCRLRDTPIMTFINKLDREGKNPIDLLDEVETVLGIQCAPVTWPIGMGQRLKGVVHLISGEVHLYEQGRNFTRQDSTIFPSLDAPGLVEKIGEQMLAELREELELVQGASNPFDLDAYRAGQQTPVFFGSGVNNFGVQPLLDFFVEHAPPPQTRETTGRRVEPTEAKLSGFVFKIQANMDPQHRDRVAFMRVCSGKFTAGMKTLHVRSGKDVKLANALTFMASDREIAAEAWPGDVIGIHNHGTISIGDTFTEGESLSFTGIPNFAPELFRRARLRDPLKLKQLQKGLAQLSEEGATQFFRPLMSNDLILGAVGVLQFDVVAYRLKDEYGVDAIFEPVSVTTARWVHCDNPKKLEEFREKNAGNLGIDAAGELVYLAPTRVNLQLAQERAPDVRFSATREHAHVKAVD.

Positions 9–278 (ARRRTFAIIS…FFVEHAPPPQ (270 aa)) constitute a tr-type G domain. Residues 18–25 (SHPDAGKT), 86–90 (DTPGH), and 140–143 (NKLD) contribute to the GTP site.

It belongs to the TRAFAC class translation factor GTPase superfamily. Classic translation factor GTPase family. PrfC subfamily.

It is found in the cytoplasm. In terms of biological role, increases the formation of ribosomal termination complexes and stimulates activities of RF-1 and RF-2. It binds guanine nucleotides and has strong preference for UGA stop codons. It may interact directly with the ribosome. The stimulation of RF-1 and RF-2 is significantly reduced by GTP and GDP, but not by GMP. The protein is Peptide chain release factor 3 of Xanthomonas axonopodis pv. citri (strain 306).